A 461-amino-acid polypeptide reads, in one-letter code: Diaboline synthase (461 aa).

Catalysis depends on proton acceptor residues His185 and Asp400.

It belongs to the plant acyltransferase family. Monomer.

It localises to the cytoplasm. It catalyses the reaction 17,18-epoxy-17-hydroxycur-19-ene + acetyl-CoA = diaboline + CoA. Its pathway is alkaloid biosynthesis. Acetyltransferase involved in the biosynthesis of curare monoterpene indole alkaloids (MIAs), natural products such as diaboline, a pharmacologically active compound used to regulate blood pressure. Curare alkaloids act as animal glycine receptor antagonists. Catalyzes the conversion of 17,18-epoxy-17-hydroxycur-19-ene (Wieland-Gumlich aldehyde) to diaboline. This chain is Diaboline synthase, found in Strychnos sp.